A 309-amino-acid chain; its full sequence is MNILLANPRGFCAGVDRAISIVERALELFSPPIYVRHEVVHNRYVVQNLKDRGAVFVEELDQVPDESIVIFSAHGVSQAVRHEAKRRGLKVFDATCPLVTKVHLQVARASRKGIECILIGHAGHPEVEGTMGQYDNPAGGVHLVESPEDVANLVVKDPDNLCFVTQTTLSMDDTTDVIASLQSKYPSIEGPRKDDICYATQNRQDAVRNVAEKVELFIVVGSKNSSNSNRLRELAQKKGTTAFLVDNADDVDPSWFNGIQHVAVTAGASAPEVLVKQVVDAIAKMAPSVITEVEGRLEDTVFAVPAELR.

Residue C12 participates in [4Fe-4S] cluster binding. 2 residues coordinate (2E)-4-hydroxy-3-methylbut-2-enyl diphosphate: H41 and H74. Residues H41 and H74 each coordinate dimethylallyl diphosphate. 2 residues coordinate isopentenyl diphosphate: H41 and H74. C96 serves as a coordination point for [4Fe-4S] cluster. Residue H124 participates in (2E)-4-hydroxy-3-methylbut-2-enyl diphosphate binding. H124 is a binding site for dimethylallyl diphosphate. An isopentenyl diphosphate-binding site is contributed by H124. Residue E126 is the Proton donor of the active site. Residue T167 participates in (2E)-4-hydroxy-3-methylbut-2-enyl diphosphate binding. Residue C197 participates in [4Fe-4S] cluster binding. (2E)-4-hydroxy-3-methylbut-2-enyl diphosphate-binding residues include S225, S226, N227, and S269. Residues S225, S226, N227, and S269 each contribute to the dimethylallyl diphosphate site. Residues S225, S226, N227, and S269 each coordinate isopentenyl diphosphate.

Belongs to the IspH family. It depends on [4Fe-4S] cluster as a cofactor.

It carries out the reaction isopentenyl diphosphate + 2 oxidized [2Fe-2S]-[ferredoxin] + H2O = (2E)-4-hydroxy-3-methylbut-2-enyl diphosphate + 2 reduced [2Fe-2S]-[ferredoxin] + 2 H(+). It catalyses the reaction dimethylallyl diphosphate + 2 oxidized [2Fe-2S]-[ferredoxin] + H2O = (2E)-4-hydroxy-3-methylbut-2-enyl diphosphate + 2 reduced [2Fe-2S]-[ferredoxin] + 2 H(+). It functions in the pathway isoprenoid biosynthesis; dimethylallyl diphosphate biosynthesis; dimethylallyl diphosphate from (2E)-4-hydroxy-3-methylbutenyl diphosphate: step 1/1. Its pathway is isoprenoid biosynthesis; isopentenyl diphosphate biosynthesis via DXP pathway; isopentenyl diphosphate from 1-deoxy-D-xylulose 5-phosphate: step 6/6. Functionally, catalyzes the conversion of 1-hydroxy-2-methyl-2-(E)-butenyl 4-diphosphate (HMBPP) into a mixture of isopentenyl diphosphate (IPP) and dimethylallyl diphosphate (DMAPP). Acts in the terminal step of the DOXP/MEP pathway for isoprenoid precursor biosynthesis. The sequence is that of 4-hydroxy-3-methylbut-2-enyl diphosphate reductase from Shewanella halifaxensis (strain HAW-EB4).